A 337-amino-acid chain; its full sequence is MTQVFQGRSFLAEKDFSREEFEYLIDFSAHLKDLKKRGVPHHYLEGKNIALLFEKTSTRTRAAFTTAAIDLGAHPEYLGANDIQLGKKESTEDTAKVLGRMFDGIEFRGFSQRMVEELAEFSGVPVWNGLTDEWHPTQMLADYLTIKENFGKLEGITLVYCGDGRNNVANSLLVAGTLMGVNVHIFSPKELFPAEEIVKLAEGYAKESGAHVLVTDNVDEAVKGADVFYTDVWVSMGEEDKFKERVELLQPYQVNMELIKKANNDNLIFLHCLPAFHDTNTVYGKDVAEKFGVKEMEVTDEVFRSKYARHFDQAENRMHTIKAVMAATLGNLFIPKV.

Residues 57–60 (STRT), Gln-84, Arg-108, and 135–138 (HPTQ) contribute to the carbamoyl phosphate site. Residues Asn-167, Asp-231, and 235–236 (SM) each bind L-ornithine. Residues 272 to 273 (CL) and Arg-317 contribute to the carbamoyl phosphate site.

This sequence belongs to the aspartate/ornithine carbamoyltransferase superfamily. OTCase family.

It localises to the cytoplasm. It carries out the reaction carbamoyl phosphate + L-ornithine = L-citrulline + phosphate + H(+). It participates in amino-acid degradation; L-arginine degradation via ADI pathway; carbamoyl phosphate from L-arginine: step 2/2. Reversibly catalyzes the transfer of the carbamoyl group from carbamoyl phosphate (CP) to the N(epsilon) atom of ornithine (ORN) to produce L-citrulline. The protein is Ornithine carbamoyltransferase, catabolic (arcB) of Streptococcus agalactiae.